We begin with the raw amino-acid sequence, 310 residues long: Homoserine kinase (310 aa).

91 to 101 is an ATP binding site; sequence PIGSGLGSSAC.

This sequence belongs to the GHMP kinase family. Homoserine kinase subfamily.

The protein localises to the cytoplasm. It catalyses the reaction L-homoserine + ATP = O-phospho-L-homoserine + ADP + H(+). It functions in the pathway amino-acid biosynthesis; L-threonine biosynthesis; L-threonine from L-aspartate: step 4/5. Catalyzes the ATP-dependent phosphorylation of L-homoserine to L-homoserine phosphate. This Escherichia coli O157:H7 protein is Homoserine kinase.